Reading from the N-terminus, the 342-residue chain is Holliday junction branch migration complex subunit RuvB (342 aa).

Residues 2–181 are large ATPase domain (RuvB-L); the sequence is TDNPLLSSAS…FGIPVRLQFY (180 aa). ATP is bound by residues Leu20, Arg21, Gly62, Lys65, Thr66, Thr67, Arg171, Tyr181, and Arg218. Mg(2+) is bound at residue Thr66. The tract at residues 182–252 is small ATPAse domain (RuvB-S); sequence SVEELERVVA…IADNALTRLE (71 aa). A head domain (RuvB-H) region spans residues 255-342; sequence KIGLDLQDRR…QMPGLFGPDE (88 aa). DNA is bound by residues Arg291, Arg310, and Arg315.

The protein belongs to the RuvB family. As to quaternary structure, homohexamer. Forms an RuvA(8)-RuvB(12)-Holliday junction (HJ) complex. HJ DNA is sandwiched between 2 RuvA tetramers; dsDNA enters through RuvA and exits via RuvB. An RuvB hexamer assembles on each DNA strand where it exits the tetramer. Each RuvB hexamer is contacted by two RuvA subunits (via domain III) on 2 adjacent RuvB subunits; this complex drives branch migration. In the full resolvosome a probable DNA-RuvA(4)-RuvB(12)-RuvC(2) complex forms which resolves the HJ.

The protein resides in the cytoplasm. The enzyme catalyses ATP + H2O = ADP + phosphate + H(+). Its function is as follows. The RuvA-RuvB-RuvC complex processes Holliday junction (HJ) DNA during genetic recombination and DNA repair, while the RuvA-RuvB complex plays an important role in the rescue of blocked DNA replication forks via replication fork reversal (RFR). RuvA specifically binds to HJ cruciform DNA, conferring on it an open structure. The RuvB hexamer acts as an ATP-dependent pump, pulling dsDNA into and through the RuvAB complex. RuvB forms 2 homohexamers on either side of HJ DNA bound by 1 or 2 RuvA tetramers; 4 subunits per hexamer contact DNA at a time. Coordinated motions by a converter formed by DNA-disengaged RuvB subunits stimulates ATP hydrolysis and nucleotide exchange. Immobilization of the converter enables RuvB to convert the ATP-contained energy into a lever motion, pulling 2 nucleotides of DNA out of the RuvA tetramer per ATP hydrolyzed, thus driving DNA branch migration. The RuvB motors rotate together with the DNA substrate, which together with the progressing nucleotide cycle form the mechanistic basis for DNA recombination by continuous HJ branch migration. Branch migration allows RuvC to scan DNA until it finds its consensus sequence, where it cleaves and resolves cruciform DNA. The sequence is that of Holliday junction branch migration complex subunit RuvB from Novosphingobium aromaticivorans (strain ATCC 700278 / DSM 12444 / CCUG 56034 / CIP 105152 / NBRC 16084 / F199).